Consider the following 221-residue polypeptide: Transcription factor bHLH126 (221 aa).

Disordered regions lie at residues 1-46 (MDPY…KKLL) and 104-132 (RRDE…VGKS). Residues 42–94 (KKKLLHRDIERQRRQEMATLFATLRTHLPLKYIKGKRAVSDHVNGAVNFIKDT) form the bHLH domain.

Homodimer.

Its subcellular location is the nucleus. The sequence is that of Transcription factor bHLH126 (BHLH126) from Arabidopsis thaliana (Mouse-ear cress).